A 495-amino-acid chain; its full sequence is Putative aldehyde dehydrogenase AldA (495 aa).

An NAD(+)-binding site is contributed by 212–218 (GKGSESG). Residues Glu256 and Cys290 contribute to the active site.

Belongs to the aldehyde dehydrogenase family.

It carries out the reaction an aldehyde + NAD(+) + H2O = a carboxylate + NADH + 2 H(+). This Staphylococcus aureus (strain MRSA252) protein is Putative aldehyde dehydrogenase AldA (aldA).